We begin with the raw amino-acid sequence, 437 residues long: Probable eukaryotic translation initiation factor 5-2 (437 aa).

A GTP-binding site is contributed by 29 to 36 (GKGNGIKT). Composition is skewed to basic and acidic residues over residues 148–179 (EQKKVSKDKKAMRKAEKERLKEGELADEEQRK) and 191–212 (KDSKTSKNHSSDEDISPKHDEN). Disordered stretches follow at residues 148–231 (EQKK…WQTD) and 262–284 (EKKAPKSKSNGNVVKTENPPPQE). Residue serine 201 is modified to Phosphoserine; by CK2. The span at 213-226 (ALEVDEDEDDDDGV) shows a compositional bias: acidic residues. Threonine 230 is modified (phosphothreonine; by CK2). The W2 domain occupies 278 to 436 (ENPPPQEKNL…QSAESESEEE (159 aa)). 3 positions are modified to phosphoserine; by CK2: serine 428, serine 431, and serine 433.

The protein belongs to the eIF-2-beta/eIF-5 family. In terms of processing, phosphorylated at Ser-201, Thr-230, Ser-428, Ser-431, and Ser-433 by CK2.

Functionally, catalyzes the hydrolysis of GTP bound to the 40S ribosomal initiation complex (40S.mRNA.Met-tRNA[F].eIF-2.GTP) with the subsequent joining of a 60S ribosomal subunit resulting in the release of eIF-2 and the guanine nucleotide. The subsequent joining of a 60S ribosomal subunit results in the formation of a functional 80S initiation complex (80S.mRNA.Met-tRNA[F]). This chain is Probable eukaryotic translation initiation factor 5-2, found in Arabidopsis thaliana (Mouse-ear cress).